Reading from the N-terminus, the 247-residue chain is Mast cell protease 2 (247 aa).

Residues 1-18 (MQALLFLMALLLPSGAGA) form the signal peptide. A propeptide spans 19–20 (EE) (activation peptide). Residues 21-244 (IIGGVESIPH…YVPWINAVIN (224 aa)) form the Peptidase S1 domain. An intrachain disulfide couples Cys50 to Cys66. Residues His65 and Asp109 each act as charge relay system in the active site. 2 disulfide bridges follow: Cys143/Cys208 and Cys174/Cys187. The Charge relay system role is filled by Ser202.

This sequence belongs to the peptidase S1 family. Granzyme subfamily.

Its function is as follows. This enzyme, isolated from small intestine, specifically inactivates the apo forms of a certain group of intracellular pyridoxal phosphate-requiring enzymes. It has chymotrypsin-like specificity towards small substrates. The protein is Mast cell protease 2 (Mcpt2) of Rattus norvegicus (Rat).